A 76-amino-acid chain; its full sequence is Large ribosomal subunit protein bL31 (76 aa).

The protein belongs to the bacterial ribosomal protein bL31 family. Type A subfamily. In terms of assembly, part of the 50S ribosomal subunit.

In terms of biological role, binds the 23S rRNA. This chain is Large ribosomal subunit protein bL31, found in Picosynechococcus sp. (strain ATCC 27264 / PCC 7002 / PR-6) (Agmenellum quadruplicatum).